The chain runs to 304 residues: Nod factor export ATP-binding protein I (304 aa).

The ABC transporter domain maps to 6 to 236 (IDFRNVEKRY…EIGCDVIEIY (231 aa)). Residue 38-45 (GPNGAGKT) participates in ATP binding.

It belongs to the ABC transporter superfamily. Lipooligosaccharide exporter (TC 3.A.1.102) family. The complex is composed of two ATP-binding proteins (NodI) and two transmembrane proteins (NodJ).

It localises to the cell inner membrane. Functionally, part of the ABC transporter complex NodIJ involved in the export of the nodulation factors (Nod factors), the bacterial signal molecules that induce symbiosis and subsequent nodulation induction. Nod factors are LCO (lipo-chitin oligosaccharide), a modified beta-1,4-linked N-acetylglucosamine oligosaccharide. This subunit is responsible for energy coupling to the transport system. The polypeptide is Nod factor export ATP-binding protein I (Burkholderia orbicola (strain AU 1054)).